Consider the following 224-residue polypeptide: Haloacetate dehalogenase H-2 (224 aa).

The active-site Nucleophile is the Asp10.

This sequence belongs to the HAD-like hydrolase superfamily. S-2-haloalkanoic acid dehalogenase family.

It catalyses the reaction a haloacetate + H2O = a halide anion + glycolate + H(+). The protein is Haloacetate dehalogenase H-2 (dehH2) of Moraxella sp. (strain B).